We begin with the raw amino-acid sequence, 374 residues long: Eukaryotic translation initiation factor 3 subunit M (374 aa).

One can recognise a PCI domain in the interval 180–339; sequence TAAKVMVELL…RKVVVSHSTH (160 aa).

Belongs to the eIF-3 subunit M family. Component of the eukaryotic translation initiation factor 3 (eIF-3) complex, which is composed of 13 subunits: EIF3A, EIF3B, EIF3C, EIF3D, EIF3E, EIF3F, EIF3G, EIF3H, EIF3I, EIF3J, EIF3K, EIF3L and EIF3M.

It localises to the cytoplasm. Component of the eukaryotic translation initiation factor 3 (eIF-3) complex, which is involved in protein synthesis of a specialized repertoire of mRNAs and, together with other initiation factors, stimulates binding of mRNA and methionyl-tRNAi to the 40S ribosome. The eIF-3 complex specifically targets and initiates translation of a subset of mRNAs involved in cell proliferation. The polypeptide is Eukaryotic translation initiation factor 3 subunit M (Gallus gallus (Chicken)).